The sequence spans 584 residues: Aspartate--tRNA(Asp/Asn) ligase (584 aa).

Residue Glu-173 participates in L-aspartate binding. An aspartate region spans residues 197-200 (QLFK). Residue Arg-219 participates in L-aspartate binding. ATP-binding positions include 219–221 (RDE) and Gln-228. His-447 lines the L-aspartate pocket. ATP is bound at residue Glu-477. Residue Arg-484 participates in L-aspartate binding. 529–532 (GFDR) contributes to the ATP binding site.

This sequence belongs to the class-II aminoacyl-tRNA synthetase family. Type 1 subfamily. Homodimer.

The protein localises to the cytoplasm. It carries out the reaction tRNA(Asx) + L-aspartate + ATP = L-aspartyl-tRNA(Asx) + AMP + diphosphate. Functionally, aspartyl-tRNA synthetase with relaxed tRNA specificity since it is able to aspartylate not only its cognate tRNA(Asp) but also tRNA(Asn). Reaction proceeds in two steps: L-aspartate is first activated by ATP to form Asp-AMP and then transferred to the acceptor end of tRNA(Asp/Asn). This Campylobacter hominis (strain ATCC BAA-381 / DSM 21671 / CCUG 45161 / LMG 19568 / NCTC 13146 / CH001A) protein is Aspartate--tRNA(Asp/Asn) ligase.